The primary structure comprises 502 residues: Histidine--tRNA ligase (502 aa).

Belongs to the class-II aminoacyl-tRNA synthetase family. As to quaternary structure, homodimer.

The protein localises to the cytoplasm. The catalysed reaction is tRNA(His) + L-histidine + ATP = L-histidyl-tRNA(His) + AMP + diphosphate + H(+). This is Histidine--tRNA ligase (hisS) from Brucella suis biovar 1 (strain 1330).